We begin with the raw amino-acid sequence, 764 residues long: Thyrotropin receptor (764 aa).

Residues 1 to 21 (MRPTPLLRLALLLVLPSSLWG) form the signal peptide. Residues 22 to 413 (ERCPSPPCEC…EFNPCEDIMG (392 aa)) lie on the Extracellular side of the membrane. Cys-31 and Cys-41 are oxidised to a cystine. The stretch at 51-74 (PPSTQTLKFIETHLKTIPSRAFSN) is one LRR 1 repeat. N-linked (GlcNAc...) asparagine glycans are attached at residues Asn-77 and Asn-99. 5 LRR repeats span residues 125–150 (LPLL…IYST), 152–174 (VFFI…AFQG), 176–199 (SNET…AFNG), 201–223 (KLDA…AFAG), and 225–248 (YSGP…GLEH). N-linked (GlcNAc...) asparagine glycosylation is found at Asn-177 and Asn-198. Residue Asn-302 is glycosylated (N-linked (GlcNAc...) asparagine). At Tyr-385 the chain carries Sulfotyrosine. The chain crosses the membrane as a helical span at residues 414–441 (YKFLRIVVWFVSLLALLGNVFVLVILLT). The Cytoplasmic portion of the chain corresponds to 442-450 (SHYKLTVPR). The chain crosses the membrane as a helical span at residues 451-473 (FLMCNLAFADFCMGLYLLLIASV). Residues 474–494 (DLYTQSEYYNHAIDWQTGPGC) are Extracellular-facing. A disulfide bridge links Cys-494 with Cys-569. Residues 495 to 517 (NTAGFFTVFASELSVYTLTVITL) form a helical membrane-spanning segment. At 518 to 537 (ERWYAITFAMHLDRKIRLWH) the chain is on the cytoplasmic side. A helical membrane pass occupies residues 538 to 560 (AYVIMLGGWVCCFLLALLPLVGI). The Extracellular segment spans residues 561–580 (SSYAKVSICLPMDTETPLAL). Residues 581–602 (AYIILVLLLNIIAFIIVCACYV) traverse the membrane as a helical segment. The Cytoplasmic segment spans residues 603–625 (KIYITVRNPHYNPGDKDTRIAKR). A helical membrane pass occupies residues 626–649 (MAVLIFTDFMCMAPISFYALSALM). The Extracellular portion of the chain corresponds to 650 to 660 (NKPLITVTNSK). The helical transmembrane segment at 661–682 (ILLVLFYPLNSCANPFLYAIFT) threads the bilayer. Residues 683–764 (KAFQRDVFML…TSKEYKQTVL (82 aa)) are Cytoplasmic-facing. The PDZ-binding motif lies at 762–764 (TVL).

The protein belongs to the G-protein coupled receptor 1 family. FSH/LSH/TSH subfamily. In terms of assembly, interacts with heterodimer GPHA2:GPHB5; this interaction stimulates cAMP production. Interacts (via the PDZ-binding motif) with SCRIB; regulates TSHR trafficking and function. In terms of processing, glycosylated. Sulfated. Sulfation on Tyr-385 plays a role in thyrotropin receptor binding and activation.

The protein resides in the cell membrane. The protein localises to the basolateral cell membrane. In terms of biological role, receptor for the thyroid-stimulating hormone (TSH) or thyrotropin. Also acts as a receptor for the heterodimeric glycoprotein hormone (GPHA2:GPHB5) or thyrostimulin. The activity of this receptor is mediated by G proteins which activate adenylate cyclase. Plays a central role in controlling thyroid cell metabolism. The polypeptide is Thyrotropin receptor (TSHR) (Ovis aries (Sheep)).